A 240-amino-acid chain; its full sequence is UDP-2,3-diacylglucosamine hydrolase (240 aa).

Positions 8, 10, 41, 79, and 114 each coordinate Mn(2+). Residue 79–80 (NR) participates in substrate binding. Substrate is bound by residues Asp122, Ser160, Asn164, Lys167, and His195. His195 and His197 together coordinate Mn(2+).

This sequence belongs to the LpxH family. It depends on Mn(2+) as a cofactor.

The protein localises to the cell inner membrane. The enzyme catalyses UDP-2-N,3-O-bis[(3R)-3-hydroxytetradecanoyl]-alpha-D-glucosamine + H2O = 2-N,3-O-bis[(3R)-3-hydroxytetradecanoyl]-alpha-D-glucosaminyl 1-phosphate + UMP + 2 H(+). Its pathway is glycolipid biosynthesis; lipid IV(A) biosynthesis; lipid IV(A) from (3R)-3-hydroxytetradecanoyl-[acyl-carrier-protein] and UDP-N-acetyl-alpha-D-glucosamine: step 4/6. Hydrolyzes the pyrophosphate bond of UDP-2,3-diacylglucosamine to yield 2,3-diacylglucosamine 1-phosphate (lipid X) and UMP by catalyzing the attack of water at the alpha-P atom. Involved in the biosynthesis of lipid A, a phosphorylated glycolipid that anchors the lipopolysaccharide to the outer membrane of the cell. The chain is UDP-2,3-diacylglucosamine hydrolase from Enterobacter sp. (strain 638).